A 466-amino-acid polypeptide reads, in one-letter code: Soluble pyridine nucleotide transhydrogenase (466 aa).

Glu-36–Cys-45 is a binding site for FAD.

Belongs to the class-I pyridine nucleotide-disulfide oxidoreductase family. In terms of assembly, homooligomer; probable homooctamer. The cofactor is FAD.

The protein resides in the cytoplasm. It carries out the reaction NAD(+) + NADPH = NADH + NADP(+). Functionally, conversion of NADPH, generated by peripheral catabolic pathways, to NADH, which can enter the respiratory chain for energy generation. The chain is Soluble pyridine nucleotide transhydrogenase from Escherichia coli O157:H7.